We begin with the raw amino-acid sequence, 140 residues long: MPTINQLVRKGREKKVFKSKSPALNKGYNSFKKEQTNVASPQKRGVCTRVGTMTPKKPNSALRKYARVRLTNGIEVTAYIPGIGHNLQEHSVVLIRGGRVKDLRGVRYHIIRGGLDTAGVANRMQGRSKYGAKKPKAAKK.

The residue at position 102 (aspartate 102) is a 3-methylthioaspartic acid.

This sequence belongs to the universal ribosomal protein uS12 family. In terms of assembly, part of the 30S ribosomal subunit. Contacts proteins S8 and S17. May interact with IF1 in the 30S initiation complex.

With S4 and S5 plays an important role in translational accuracy. Functionally, interacts with and stabilizes bases of the 16S rRNA that are involved in tRNA selection in the A site and with the mRNA backbone. Located at the interface of the 30S and 50S subunits, it traverses the body of the 30S subunit contacting proteins on the other side and probably holding the rRNA structure together. The combined cluster of proteins S8, S12 and S17 appears to hold together the shoulder and platform of the 30S subunit. This is Small ribosomal subunit protein uS12 from Geobacillus stearothermophilus (Bacillus stearothermophilus).